We begin with the raw amino-acid sequence, 300 residues long: Protein YIF1B (300 aa).

Residues 1–46 are disordered; that stretch reads MNQESSFRAPPKRRVRGPNPNISTPHQLFDDTSGGPVPHGGEYPNH. The Cytoplasmic segment spans residues 1 to 142; sequence MNQESSFRAP…APRFDINAPD (142 aa). A helical transmembrane segment spans residues 143–163; the sequence is LYIPVMAFITYILVAGLALGT. Residues 164 to 178 lie on the Extracellular side of the membrane; it reads QSRFSPEILGMQASS. Residues 179 to 199 form a helical membrane-spanning segment; the sequence is ALAWLIVEVLAILLSLYLVTV. The Cytoplasmic segment spans residues 200–205; sequence NTDLTT. Residues 206 to 226 form a helical membrane-spanning segment; sequence VDLVAFSGYKYVGMISGVISG. Residue leucine 227 is a topological domain, extracellular. The helical transmembrane segment at 228–248 threads the bilayer; that stretch reads LFGKTGYYVVLSWCGISVVFF. The Cytoplasmic segment spans residues 249 to 278; that stretch reads MIRTLRLKILSEAAAEGVLVRGARNQLRMY. Residues 279-299 form a helical membrane-spanning segment; it reads LTMAIAAVQPIFMYWLTYHLV. Residue arginine 300 is a topological domain, extracellular.

Belongs to the YIF1 family.

The protein resides in the endoplasmic reticulum membrane. Its subcellular location is the golgi apparatus membrane. It localises to the endoplasmic reticulum-Golgi intermediate compartment membrane. Its function is as follows. Functions in endoplasmic reticulum to Golgi vesicle-mediated transport and regulates the proper organization of the endoplasmic reticulum and the Golgi. Plays a key role in targeting to neuronal dendrites receptors such as HTR1A. Plays also a role in primary cilium and sperm flagellum assembly probably through protein transport to these compartments. In Xenopus tropicalis (Western clawed frog), this protein is Protein YIF1B (yif1b).